The sequence spans 501 residues: TNF receptor-associated factor 2 (501 aa).

Alanine 2 is modified (N-acetylalanine). Serine 5 is modified (phosphoserine). Threonine 7 carries the post-translational modification Phosphothreonine. Serine 11 bears the Phosphoserine mark. Threonine 22 carries the phosphothreonine modification. Lysine 31 participates in a covalent cross-link: Glycyl lysine isopeptide (Lys-Gly) (interchain with G-Cter in ubiquitin). Residues 34–73 (CSACKNILRRPFQAQCGHRYCSFCLTSILSSGPQNCAACV) form an RING-type zinc finger. At threonine 117 the chain carries Phosphothreonine; by PKC. TRAF-type zinc fingers lie at residues 124–180 (CHEG…VHYE) and 177–233 (VHYE…ENLQ). The segment at 283–293 (ENIVCVLNREV) is important for interaction with BIRC2 and BIRC3. Residues 298-348 (VTAEACSRQHRLDQDKIEALSNKVQQLERSIGLKDLAMADLEQKVSELEVS) are a coiled coil. Lysine 320 is covalently cross-linked (Glycyl lysine isopeptide (Lys-Gly) (interchain with G-Cter in ubiquitin)). The 146-residue stretch at 351-496 (DGVFIWKISD…DDAIFIKAIV (146 aa)) folds into the MATH domain.

This sequence belongs to the TNF receptor-associated factor family. A subfamily. Homotrimer. Heterotrimer with TRAF1. Heterotrimer with TRAF3 (via TRAF domain). The domain containing the RING-type and the first TRAF-type zinc finger can also form homodimers (in vitro). Interacts with TNFRSF1B/TNFR2. Interacts with TNFRSF5/CD40. Interacts with TNFRSF4, TNFRSF7/CD27, TNFRSF8/CD30, TNFRSF9/CD137, TNFRSF11A/RANK, TNFRSF13B/TACI, TNFRSF14, TNFRSF16/NGFR, TNFRSF17/BCMA, TNFRSF18/AITR, TNFRSF19/TROY, TNFRSF19L/RELT and EDAR. Stimulation of TNF-alpha receptor TNFRSF1A leads to the formation of two distinct signaling complexes. Plasma membrane-bound complex I is composed of TNFRSF1A, TRADD, RIPK1, TRAF2 and BIRC2/c-IAP1 or BIRC3 which interacts with CHUCK/IKK-alpha, IKBKB/IKK-beta and IKBKG/IKK-gamma promoting cell survival. Subsequently, TRADD, RIPK1 and TRAF2 dissociate from TNFRSF1A and form cytoplasmic complex II with FADD and caspase CASP8 promoting cell apoptosis. Interacts with TRADD. Identified in a complex with TNFRSF1A, RIPK1 and IKBKB/IKK-beta. Interacts with RIPK2. Interacts with BIRC2 and BIRC3 N-terminus; a single BIRC2 or BIRC3 molecule interacts with a heterotrimer formed by TRAF1 and TRAF2, or a TRAF2 homotrimer. Identified in a complex composed of TRAF2, TRAF3, BIRC2 and BIRC3. Interacts with BIRC2; the interaction promotes BIRC2 stability. Interaction with BIRC2 and/or BIRC3 is essential for ubiquitination of IKBKE, degradation of NFKBIA and activation of NF-kappa-B. Within complex I, phosphorylated TRAF2 interacts (via 'Lys-63'-linked polyubiquitin chains) with CHUCK/IKK-alpha, IKBKB/IKK-beta, IKBKG/IKK-gamma TAB2, TAB3 and TAK1 in response to TNF-alpha stimulation. Within complex I, interacts with UXT isoform 1 (via TPQE motif); the interaction prevents the recruitment of FADD and CASP8/caspase 8 to complex I. Forms a complex composed of TNFRSF8/CD30 or TNFRSF1B/TNFR2, and TRAF1, TRAF2 and E3 ligase TRAIP. Within the complex, interacts with TRAIP; the interaction inhibits TRAF2-mediated NF-kappa B activation. Component of a complex composed of TANK and TBK1. Interacts with TRPC4AP. Interacts with MAP3K1/MEKK1, MAP3K5/ASK1 and MAP3K11/MLK3 in response to TNF-alpha stimulation; the interaction leads to JNK activation and interaction with MAP3K5 is inhibited by PRMT1. Component of a complex composed of MAP3K14/NIK BIRC3 and TRAF3; the interaction leads to BIRC2/3-mediated ubiquitination of TRAF3 upon CD40 engagement in a TRAF2-dependent manner. Interacts with MAP3K14/NIK in response to TNF-alpha stimulation; the interaction leads to NF-kappa B activation. Interacts with PEG3; the interaction may promote TRAF2-mediated NF-kappa B activation. Interacts with HIVEP3; the interaction may inhibit TNF-alpha-TRAF2-mediated NF-kappa B and JNK activation. Interacts with TANK/ITRAF; the interaction prevents interaction between TNFRSF1B/TNFR2 and TRAF2. Interacts with deubiquitinating enzyme CYLD; the interaction results in the deubiquitination and inactivation of TRAF2. Interacts with SIAH2; the interaction leads to TRAF2 ubiquitination and degradation. Interacts with E2 conjugating enzyme UBE2N/Ubc13, E3 ligase ITCH and RNF11 in response to TNF-alpha stimulation. Interacts with ubiquitin-editing enzyme TNFAIP3/A20 in response to TNF-alpha stimulation; the interaction promotes TRAF2 dissociation from UBE2N/Ubc13, ITCH, RNF11 and TAX1BP1 and prevents prolonged TRAF-2 ubiquitination. Interacts with TAX1BP1 in response to TNF-alpha stimulation; the interaction promotes TRAF2 dissociation from UBE2N/Ubc13 and TNFAIP3/A20, and prevents prolonged TRAF-2 ubiquitination. Interacts (via C-terminus) with EIF2AK2/PKR (via the kinase catalytic domain). Interacts with deubiquitinating enzyme USP48. Interacts with PTPN2; probably involved in TNF-mediated signaling. Interacts with Toll-like receptor TLR4/3 adapter TICAM1/TRIF; the interaction may promote TICAM1 ubiquitination. Interacts with kinase/endoribonuclease ERN1/IRE1 and DAB2IP in response to ER stress; the interaction requires DAB2IP. Interacts with ERN1/IRE1 and TAOK3 in response to ER stress; the interaction may promote TRAF2 phosphorylation. Interacts (via zinc fingers) with DAB2IP (via C-terminus PER domain) in response to TNF-alpha stimulation. Interacts with CASP8AP2/FLASH. Interacts with NFATC2IP; the interaction may repress IL-4 production in T cells. Interacts with kinase CDK9. Interacts with sphingosine kinase 1 SPHK1. Interacts with kinase TNIK. Interacts with TRAFD1. Interacts with DNA phosphodiesterase TDP2. Interacts with MAVS/IPS1. Interacts with CARD14. Interacts with GPS2. Interacts with XPNPEP3. Interacts with RIPK3. Interacts with RELL2. Interacts with LRRC19. Interacts with GAPDH; promoting TRAF2 ubiquitination. Phosphorylated at several serine residues within the first 128 amino acid residues. Phosphorylated at Thr-117 in response to signaling via TNF and TNFRSF1A. Phosphorylation at Thr-117 is required for 'Lys-63'-linked polyubiquitination, but not for 'Lys-48'-linked polyubiquitination. Phosphorylation at Thr-117 is important for interaction with IKKA and IKKB, activation of IKK and subsequent activation of NF-kappa-B. In terms of processing, undergoes both 'Lys-48'-linked and 'Lys-63'-linked polyubiquitination. Polyubiquitinated via 'Lys-63'-linked ubiquitin in response to TNF signaling; this requires prior phosphorylation at Thr-117. 'Lys-63'-linked polyubiquitination promotes TRAF2-mediated activation of NF-kappa-B. Can be polyubiquitinated at several Lys residues via 'Lys-48'-linked ubiquitin chains in response to TNF signaling, leading to proteasomal degradation. Autoubiquitinated, leading to its subsequent proteasomal degradation. Polyubiquitinated by BIRC2 and SIAH2, leading to its subsequent proteasomal degradation. Not ubiquitinated by BIRC3 or SIAH1. Deubiquitinated by CYLD, a protease that specifically cleaves 'Lys-63'-linked polyubiquitin chains. Ubiquination is inhibited by LRRC19; inhiits proteasomal degradation. Ubiquitinated at Lys-320 by the SCF(FBXL2) complex, leading to its degradation by the proteasome. Ubiquitinated by E3 ubiquitin-protein ligase complex containing FBXO7; leading to repression of NF-kappa-B signaling. As to expression, isoform 1 and isoform 2 are expressed in spleen, adipose tissues, skeletal muscles, thymus, testis, heart, lung, brain. Isoform 2 is very weakly expressed in heart, lung and brain.

It localises to the cytoplasm. The catalysed reaction is S-ubiquitinyl-[E2 ubiquitin-conjugating enzyme]-L-cysteine + [acceptor protein]-L-lysine = [E2 ubiquitin-conjugating enzyme]-L-cysteine + N(6)-ubiquitinyl-[acceptor protein]-L-lysine.. It participates in protein modification; protein ubiquitination. Has very low E3 ubiquitin ligase activity in the absence of sphingosine-1-phosphate. E3 ubiquitin ligase activity is strongly activated by cytoplasmic sphingosine-1-phosphate. E3 ubiquitin-protein ligase that regulates activation of NF-kappa-B and JNK and plays a central role in the regulation of cell survival and apoptosis. Catalyzes 'Lys-63'-linked ubiquitination of target proteins, such as BIRC3, IKBKE, MLST8, RIPK1 and TICAM1. Is an essential constituent of several E3 ubiquitin-protein ligase complexes, where it promotes the ubiquitination of target proteins by bringing them into contact with other E3 ubiquitin ligases. Regulates BIRC2 and BIRC3 protein levels by inhibiting their autoubiquitination and subsequent degradation; this does not depend on the TRAF2 RING-type zinc finger domain. Plays a role in mediating activation of NF-kappa-B by EIF2AK2/PKR. In complex with BIRC2 or BIRC3, promotes ubiquitination of IKBKE. Acts as a regulator of mTORC1 and mTORC2 assembly by mediating 'Lys-63'-linked ubiquitination of MLST8, thereby inhibiting formation of the mTORC2 complex, while facilitating assembly of the mTORC1 complex. Required for normal antibody isotype switching from IgM to IgG. This is TNF receptor-associated factor 2 (Traf2) from Mus musculus (Mouse).